The following is a 73-amino-acid chain: MRFALVAAITIALLVAGSVADESSEDIDNIVIKTPLDLPRCDSPFCSLFRIGLCGDKCTCVPLPIFGLCVPDV.

An N-terminal signal peptide occupies residues 1 to 20 (MRFALVAAITIALLVAGSVA). Residues 21–37 (DESSEDIDNIVIKTPLD) constitute a propeptide that is removed on maturation. Disulfide bonds link C41–C58, C46–C60, and C54–C69.

Belongs to the gympietide family. As to expression, expressed in trichomes, that are stiff epidermal hairs located on the surface of petioles and leaves. Not expressed in other aerial parts.

It localises to the secreted. Its function is as follows. Neurotoxin certainly responsible for the defensive, persistent, and painful stings of the giant stinging tree. Inhibits inactivation of Nav1.7/SCN9A sodium channel in sensory neurons by directly interacting with TMEM233, a newly described Nav-interacting protein. Has virtually no effect on Nav1.7/SCN9A function in heterologous expression systems and in neurons that do not express TMEM233. Also weakly but significantly affects Nav1.8/SCN10A. Coexpression of TMEM233 with Nav also confers ExTxA sensitivity to Nav1.1-Nav1.6. On the Nav1.7/SCN9A channel, causes a significant hyperpolarizing shift in the voltage dependence of activation. Its effects on Nav currents are irreversible, with no apparent reduction in activity even after repeated wash steps over 30 minutes. Does not show activity on Nav1.9/SCN11A. Does not show insecticidal activities. In vivo, induces nocifensive behavior in mice (licking or biting and shaking or lifting of the affected paw) lasting for approximately 1 hour. The sequence is that of Excelsatoxin A from Dendrocnide excelsa (Giant stinging tree).